Reading from the N-terminus, the 92-residue chain is Envelope glycoprotein J (92 aa).

Positions 1–22 (MDRYAVRTWGIVGILGCAAVGA) are cleaved as a signal peptide. The Extracellular portion of the chain corresponds to 23–49 (APTGPASDTTNATARLPTHPPLIRSGG). Asparagine 33 carries N-linked (GlcNAc...) asparagine; by host glycosylation. A helical transmembrane segment spans residues 50–70 (FAVPLIVGGLCLMILGMACLL). Over 71–92 (EVLRRLGRELARCCPHAGQFAP) the chain is Cytoplasmic.

This sequence belongs to the alphaherpesvirinae glycoprotein J family.

It is found in the host Golgi apparatus membrane. It localises to the host endoplasmic reticulum membrane. The protein resides in the host endosome membrane. Functions as an activator of viral protein expression and virus production. In turn, promotes cell-to-cell spread as well as syncytia formation. In Homo sapiens (Human), this protein is Envelope glycoprotein J (gJ).